Here is a 318-residue protein sequence, read N- to C-terminus: Protein W (318 aa).

2 disordered regions span residues 1 to 23 (MDQDAFILKEDSEVEREAPGGRE) and 38 to 318 (SEPT…KKGA). Over residues 7 to 20 (ILKEDSEVEREAPG) the composition is skewed to basic and acidic residues. Polar residues predominate over residues 50–59 (LHNTINTPQG). Ser68 carries the phosphoserine; by host modification. Basic and acidic residues predominate over residues 83–101 (RSGEESRVSGRTSKPEAEA). Ser125 bears the Phosphoserine; by host mark. Residues 150–168 (GIEDENREMAAHPDKRGED) are compositionally biased toward basic and acidic residues. Positions 191–206 (ASNNGRSMEPGSSHSA) are enriched in polar residues. Phosphoserine; by host occurs at positions 192, 249, 257, and 260.

This chain is Protein W (P/V/C), found in Sendai virus (strain Harris) (SeV).